The sequence spans 511 residues: Bifunctional purine biosynthesis protein PurH (511 aa).

The MGS-like domain occupies 1 to 147 (MIQIKRALIS…KNYKHTLVLT (147 aa)).

This sequence belongs to the PurH family.

It carries out the reaction (6R)-10-formyltetrahydrofolate + 5-amino-1-(5-phospho-beta-D-ribosyl)imidazole-4-carboxamide = 5-formamido-1-(5-phospho-D-ribosyl)imidazole-4-carboxamide + (6S)-5,6,7,8-tetrahydrofolate. The enzyme catalyses IMP + H2O = 5-formamido-1-(5-phospho-D-ribosyl)imidazole-4-carboxamide. The protein operates within purine metabolism; IMP biosynthesis via de novo pathway; 5-formamido-1-(5-phospho-D-ribosyl)imidazole-4-carboxamide from 5-amino-1-(5-phospho-D-ribosyl)imidazole-4-carboxamide (10-formyl THF route): step 1/1. It functions in the pathway purine metabolism; IMP biosynthesis via de novo pathway; IMP from 5-formamido-1-(5-phospho-D-ribosyl)imidazole-4-carboxamide: step 1/1. In Leptospira interrogans serogroup Icterohaemorrhagiae serovar Lai (strain 56601), this protein is Bifunctional purine biosynthesis protein PurH.